Consider the following 75-residue polypeptide: Sec-independent protein translocase protein TatA (75 aa).

Residues 1 to 21 (MGGFSIWHWLIVLVIVLLVFG) form a helical membrane-spanning segment. The interval 41–75 (KGMHDDDKPAGKLGDDSRTAEQAREAQAERDRDAR) is disordered.

It belongs to the TatA/E family. The Tat system comprises two distinct complexes: a TatABC complex, containing multiple copies of TatA, TatB and TatC subunits, and a separate TatA complex, containing only TatA subunits. Substrates initially bind to the TatABC complex, which probably triggers association of the separate TatA complex to form the active translocon.

The protein resides in the cell inner membrane. Part of the twin-arginine translocation (Tat) system that transports large folded proteins containing a characteristic twin-arginine motif in their signal peptide across membranes. TatA could form the protein-conducting channel of the Tat system. The sequence is that of Sec-independent protein translocase protein TatA from Xanthomonas axonopodis pv. citri (strain 306).